Consider the following 585-residue polypeptide: Proline--tRNA ligase (585 aa).

It belongs to the class-II aminoacyl-tRNA synthetase family. ProS type 1 subfamily. As to quaternary structure, homodimer.

It localises to the cytoplasm. It carries out the reaction tRNA(Pro) + L-proline + ATP = L-prolyl-tRNA(Pro) + AMP + diphosphate. Functionally, catalyzes the attachment of proline to tRNA(Pro) in a two-step reaction: proline is first activated by ATP to form Pro-AMP and then transferred to the acceptor end of tRNA(Pro). As ProRS can inadvertently accommodate and process non-cognate amino acids such as alanine and cysteine, to avoid such errors it has two additional distinct editing activities against alanine. One activity is designated as 'pretransfer' editing and involves the tRNA(Pro)-independent hydrolysis of activated Ala-AMP. The other activity is designated 'posttransfer' editing and involves deacylation of mischarged Ala-tRNA(Pro). The misacylated Cys-tRNA(Pro) is not edited by ProRS. The chain is Proline--tRNA ligase from Corynebacterium diphtheriae (strain ATCC 700971 / NCTC 13129 / Biotype gravis).